Consider the following 165-residue polypeptide: Large ribosomal subunit protein uL10 (165 aa).

It belongs to the universal ribosomal protein uL10 family. As to quaternary structure, part of the ribosomal stalk of the 50S ribosomal subunit. The N-terminus interacts with L11 and the large rRNA to form the base of the stalk. The C-terminus forms an elongated spine to which L12 dimers bind in a sequential fashion forming a multimeric L10(L12)X complex.

In terms of biological role, forms part of the ribosomal stalk, playing a central role in the interaction of the ribosome with GTP-bound translation factors. The polypeptide is Large ribosomal subunit protein uL10 (Cronobacter sakazakii (strain ATCC BAA-894) (Enterobacter sakazakii)).